Consider the following 145-residue polypeptide: Cytochrome c-type biogenesis protein CcmE (145 aa).

At 1 to 7 (MKAKHQR) the chain is on the cytoplasmic side. A helical; Signal-anchor for type II membrane protein membrane pass occupies residues 8–28 (LILAVAALCGVAGAGVLAASA). The Periplasmic segment spans residues 29–145 (LRDEAAYFRT…PKNMKAAVEG (117 aa)). Heme contacts are provided by histidine 123 and tyrosine 127.

It belongs to the CcmE/CycJ family.

Its subcellular location is the cell inner membrane. In terms of biological role, heme chaperone required for the biogenesis of c-type cytochromes. Transiently binds heme delivered by CcmC and transfers the heme to apo-cytochromes in a process facilitated by CcmF and CcmH. The protein is Cytochrome c-type biogenesis protein CcmE of Sphingopyxis alaskensis (strain DSM 13593 / LMG 18877 / RB2256) (Sphingomonas alaskensis).